The chain runs to 131 residues: Profilin-1 (131 aa).

A disulfide bridge connects residues Cys-13 and Cys-115. An Involved in PIP2 interaction motif is present at residues 81 to 97 (AVIRGKKGSGGITVKKT). A Phosphothreonine modification is found at Thr-111.

The protein belongs to the profilin family. In terms of assembly, multimer. Occurs in many kinds of cells as a complex with monomeric actin in a 1:1 ratio. In terms of processing, phosphorylated by MAP kinases. As to expression, pollen specific.

It localises to the cytoplasm. The protein localises to the cytoskeleton. Its function is as follows. Binds to actin and affects the structure of the cytoskeleton. At high concentrations, profilin prevents the polymerization of actin, whereas it enhances it at low concentrations. By binding to PIP2, it inhibits the formation of IP3 and DG. The protein is Profilin-1 (PRO1) of Zea mays (Maize).